We begin with the raw amino-acid sequence, 368 residues long: D-alanine--D-alanine ligase (368 aa).

Residues 151 to 358 (KKLLAAEGLP…YRTLISTLVD (208 aa)) enclose the ATP-grasp domain. 179 to 234 (KAELGLPVFVKPARGGSSIGITRVSNWDGLDGAIAHARLHDPKVIVEGAIIGREVE) serves as a coordination point for ATP. Aspartate 313, glutamate 325, and asparagine 327 together coordinate Mg(2+).

Belongs to the D-alanine--D-alanine ligase family. It depends on Mg(2+) as a cofactor. Requires Mn(2+) as cofactor.

The protein localises to the cytoplasm. It catalyses the reaction 2 D-alanine + ATP = D-alanyl-D-alanine + ADP + phosphate + H(+). The protein operates within cell wall biogenesis; peptidoglycan biosynthesis. In terms of biological role, cell wall formation. The polypeptide is D-alanine--D-alanine ligase (Rhodococcus erythropolis (strain PR4 / NBRC 100887)).